A 344-amino-acid polypeptide reads, in one-letter code: Ferrochelatase (344 aa).

Fe cation contacts are provided by His-214 and Glu-295.

It belongs to the ferrochelatase family.

It is found in the cytoplasm. It carries out the reaction heme b + 2 H(+) = protoporphyrin IX + Fe(2+). Its pathway is porphyrin-containing compound metabolism; protoheme biosynthesis; protoheme from protoporphyrin-IX: step 1/1. Functionally, catalyzes the ferrous insertion into protoporphyrin IX. This Allorhizobium ampelinum (strain ATCC BAA-846 / DSM 112012 / S4) (Agrobacterium vitis (strain S4)) protein is Ferrochelatase.